Consider the following 364-residue polypeptide: Probable cysteine protease RDL4 (364 aa).

The N-terminal stretch at 1–23 (MGSAKSAMLILLVAMVIASCATA) is a signal peptide. A propeptide spans 24-136 (IDMSVVSYDD…DRYKTSADDV (113 aa)) (activation peptide). Asparagine 87 carries N-linked (GlcNAc...) asparagine glycosylation. 3 disulfides stabilise this stretch: cysteine 158–cysteine 199, cysteine 192–cysteine 232, and cysteine 291–cysteine 342. Residue cysteine 161 is part of the active site. Active-site residues include histidine 297 and asparagine 317.

This sequence belongs to the peptidase C1 family. Expressed in inflorescences.

Its function is as follows. Probable thiol protease. In Arabidopsis thaliana (Mouse-ear cress), this protein is Probable cysteine protease RDL4.